Here is a 270-residue protein sequence, read N- to C-terminus: Protein MGF 110-1L (270 aa).

Residues 1–26 (MLGLQIFTLLSIPTLLYTYEIEPLER) form the signal peptide. Topologically, residues 27–117 (TSTPPEKELG…HERHEADIRK (91 aa)) are extracellular. One copy of the A repeat lies at 27 to 146 (TSTPPEKELG…YIRKRSLQTV (120 aa)). Asn-75 carries N-linked (GlcNAc...) asparagine; by host glycosylation. The helical transmembrane segment at 118-138 (WQKLLTYGFYLAGCILAVNYI) threads the bilayer. At 139–145 (RKRSLQT) the chain is on the cytoplasmic side. The helical transmembrane segment at 146–166 (VMYLLVFLVISFLLSQLMLYG) threads the bilayer. The B repeat unit spans residues 147–270 (MYLLVFLVIS…DNLMKKQDIM (124 aa)). At 167 to 270 (ELEDKKHKIG…DNLMKKQDIM (104 aa)) the chain is on the extracellular side.

The protein belongs to the asfivirus MGF 110 family.

The protein resides in the membrane. Functionally, plays a role in virus cell tropism, and may be required for efficient virus replication in macrophages. The chain is Protein MGF 110-1L from Ornithodoros (relapsing fever ticks).